Consider the following 106-residue polypeptide: Large ribosomal subunit protein eL30 (106 aa).

It belongs to the eukaryotic ribosomal protein eL30 family. In terms of assembly, component of the large ribosomal subunit. Mature ribosomes consist of a small (40S) and a large (60S) subunit. The 40S subunit contains about 32 different proteins and 1 molecule of RNA (18S). The 60S subunit contains 45 different proteins and 3 molecules of RNA (25S, 5.8S and 5S).

It is found in the cytoplasm. Functionally, component of the ribosome, a large ribonucleoprotein complex responsible for the synthesis of proteins in the cell. The small ribosomal subunit (SSU) binds messenger RNAs (mRNAs) and translates the encoded message by selecting cognate aminoacyl-transfer RNA (tRNA) molecules. The large subunit (LSU) contains the ribosomal catalytic site termed the peptidyl transferase center (PTC), which catalyzes the formation of peptide bonds, thereby polymerizing the amino acids delivered by tRNAs into a polypeptide chain. The nascent polypeptides leave the ribosome through a tunnel in the LSU and interact with protein factors that function in enzymatic processing, targeting, and the membrane insertion of nascent chains at the exit of the ribosomal tunnel. The polypeptide is Large ribosomal subunit protein eL30 (Candida albicans (strain SC5314 / ATCC MYA-2876) (Yeast)).